An 860-amino-acid chain; its full sequence is Transforming growth factor-beta receptor-associated protein 1 (860 aa).

In terms of domain architecture, CNH spans 24–297 (RVNIECVECC…HILQDFEGRV (274 aa)). One copy of the CHCR repeat lies at 564 to 728 (RPLDEQQKNS…LLAIYLHAGP (165 aa)).

This sequence belongs to the TRAP1 family. Interacts with TGFBR2 and ACVR2B; in the absence of ligand stimulation. Interacts with TGFBR1, ACVRL1, BMPR1A and ACVR1B; in the absence of ligand stimulation and to a less extent. Interacts with SMAD4; the interaction seems to be mutually exclusive with the interaction of SMAD4 and phosphorylated SMAD2. May interact with ALOX5. Interacts with RAB5C. Interacts with VPS8, VPS11 and VPS16. Component of the putative class C core vacuole/endosome tethering (CORVET) complex; the core of which composed of the class C Vps proteins VPS11, VPS16, VPS18 and VPS33A, is associated with VPS8 and TGFBRAP1.

Its subcellular location is the cytoplasm. The protein resides in the early endosome. Plays a role in the TGF-beta/activin signaling pathway. It associates with inactive heteromeric TGF-beta and activin receptor complexes, mainly through the type II receptor, and is released upon activation of signaling. May recruit SMAD4 to the vicinity of the receptor complex and facilitate its interaction with receptor-regulated Smads, such as SMAD2. Its function is as follows. Plays a role in vesicle-mediated protein trafficking of the endocytic membrane transport pathway. Believed to act as a component of the putative CORVET endosomal tethering complexes which is proposed to be involved in the Rab5-to-Rab7 endosome conversion probably implicating MON1A/B, and via binding SNAREs and SNARE complexes to mediate tethering and docking events during SNARE-mediated membrane fusion. The CORVET complex is proposed to function as a Rab5 effector to mediate early endosome fusion probably in specific endosome subpopulations. Functions predominantly in APPL1-containing endosomes and in degradative but not recycling trafficking of endocytosed cargo. This is Transforming growth factor-beta receptor-associated protein 1 (TGFBRAP1) from Homo sapiens (Human).